The sequence spans 284 residues: Polyamine aminopropyltransferase (284 aa).

The PABS domain occupies 2–237; the sequence is ELWYTEQHTE…GHWLFGFASK (236 aa). Gln31 contacts S-methyl-5'-thioadenosine. 2 residues coordinate spermidine: His62 and Asp86. S-methyl-5'-thioadenosine is bound by residues Glu106 and 137-138; that span reads DG. Asp155 acts as the Proton acceptor in catalysis. Residue 155 to 158 participates in spermidine binding; it reads DSTD. Pro162 contributes to the S-methyl-5'-thioadenosine binding site.

Belongs to the spermidine/spermine synthase family. Homodimer or homotetramer.

Its subcellular location is the cytoplasm. The enzyme catalyses S-adenosyl 3-(methylsulfanyl)propylamine + putrescine = S-methyl-5'-thioadenosine + spermidine + H(+). It functions in the pathway amine and polyamine biosynthesis; spermidine biosynthesis; spermidine from putrescine: step 1/1. Its function is as follows. Catalyzes the irreversible transfer of a propylamine group from the amino donor S-adenosylmethioninamine (decarboxy-AdoMet) to putrescine (1,4-diaminobutane) to yield spermidine. This is Polyamine aminopropyltransferase from Alkaliphilus oremlandii (strain OhILAs) (Clostridium oremlandii (strain OhILAs)).